A 203-amino-acid chain; its full sequence is ATP-dependent Clp protease proteolytic subunit (203 aa).

S107 functions as the Nucleophile in the catalytic mechanism. Residue H132 is part of the active site.

The protein belongs to the peptidase S14 family. Fourteen ClpP subunits assemble into 2 heptameric rings which stack back to back to give a disk-like structure with a central cavity, resembling the structure of eukaryotic proteasomes.

The protein localises to the cytoplasm. It catalyses the reaction Hydrolysis of proteins to small peptides in the presence of ATP and magnesium. alpha-casein is the usual test substrate. In the absence of ATP, only oligopeptides shorter than five residues are hydrolyzed (such as succinyl-Leu-Tyr-|-NHMec, and Leu-Tyr-Leu-|-Tyr-Trp, in which cleavage of the -Tyr-|-Leu- and -Tyr-|-Trp bonds also occurs).. Functionally, cleaves peptides in various proteins in a process that requires ATP hydrolysis. Has a chymotrypsin-like activity. Plays a major role in the degradation of misfolded proteins. The protein is ATP-dependent Clp protease proteolytic subunit of Shewanella pealeana (strain ATCC 700345 / ANG-SQ1).